The chain runs to 96 residues: Exodeoxyribonuclease 7 small subunit (96 aa).

The segment at 73–96 (RAPEQSAANDVSAPGSAEEHDHGR) is disordered.

Belongs to the XseB family. Heterooligomer composed of large and small subunits.

The protein localises to the cytoplasm. It catalyses the reaction Exonucleolytic cleavage in either 5'- to 3'- or 3'- to 5'-direction to yield nucleoside 5'-phosphates.. Its function is as follows. Bidirectionally degrades single-stranded DNA into large acid-insoluble oligonucleotides, which are then degraded further into small acid-soluble oligonucleotides. The protein is Exodeoxyribonuclease 7 small subunit of Acidothermus cellulolyticus (strain ATCC 43068 / DSM 8971 / 11B).